Reading from the N-terminus, the 258-residue chain is F-box/SPRY domain-containing protein 1 (258 aa).

The F-box domain maps to 6 to 54 (TEYAPDIPDNVLELIFSYLKLQDLRNCALVCKSWHRFLSDENNEVWRAQ). Residues 64–256 (FKTDLLSVVP…ISMVYLGPPL (193 aa)) enclose the B30.2/SPRY domain.

The protein belongs to the FBXO45/Fsn family. As to quaternary structure, component of an E3 ubiquitin ligase complex composed of hiw and Fsn.

The protein resides in the synapse. It participates in protein modification; protein ubiquitination. Required in the presynaptic motoneuron to down-regulate the levels of wnd and restrain synaptic terminal growth at the neuromuscular junction (NMJ). The polypeptide is F-box/SPRY domain-containing protein 1 (Culex quinquefasciatus (Southern house mosquito)).